Here is a 252-residue protein sequence, read N- to C-terminus: MHPKQQRESFRSKQYTGTTSGMCDNYLQANMIILPKEYAFEFLLFCQRNPKSCPIIDVLEEGVTTPQIADADIRTDLPKYRIYRNGQLDKEVTDIKDKWRADFVTFLIGCSFTFEKALIENGIRLLHQEQERVVPMYKTNIPCEKAGRFEGNMVVSMRALEPEEIDKAVKITERFETSHGSPVHIGNPEEIGIKDIDNPDYGESISFDKKKRTPVFWACGVTPQNVGLNVKPPIMIAHAPGHMLITDQLEEK.

It belongs to the D-glutamate cyclase family.

In Oceanobacillus iheyensis (strain DSM 14371 / CIP 107618 / JCM 11309 / KCTC 3954 / HTE831), this protein is Putative hydro-lyase OB3382.